We begin with the raw amino-acid sequence, 373 residues long: Probable jasmonic acid carboxyl methyltransferase 1 (373 aa).

Residue Tyr-18 participates in S-adenosyl-L-homocysteine binding. Jasmonate is bound at residue Gln-25. Residues Cys-59, Asn-64, Asp-96, Leu-97, Ser-135, and Phe-136 each coordinate S-adenosyl-L-homocysteine. Jasmonate contacts are provided by His-156 and Trp-157. Residues Asn-174, Asp-260, Phe-262, and Asn-263 each contribute to the Mg(2+) site.

This sequence belongs to the methyltransferase superfamily. Type-7 methyltransferase family. Requires Mg(2+) as cofactor.

Its subcellular location is the cytoplasm. It localises to the nucleus. It carries out the reaction jasmonate + S-adenosyl-L-methionine = methyl (-)-jasmonate + S-adenosyl-L-homocysteine. Its pathway is lipid metabolism; oxylipin biosynthesis. Functionally, catalyzes the methylation of jasmonate into methyljasmonate, a plant volatile that acts as an important cellular regulator mediating diverse developmental processes and defense responses. This is Probable jasmonic acid carboxyl methyltransferase 1 from Theobroma cacao (Cacao).